The chain runs to 1450 residues: MYSNPNNFFGGNAMGPGAPQYGAGQPQQQQQQQQQPDPFAPQPTGFAQAPLQQQYTGYPGLQAPQGQLQPQFTGYGQTPQQGMATGAPPMPAIPQQYQQQFQQQQTQQQQPQQQQMPFAAAPPQPTQTLAPPPPVKPQATGFSEMAASFHAGGGARSQPSAAPRKANTVPNIRLSFITAPDQAKFETLFKSAVGDGQTTMSGEKARDLLLRSRLDGDSLSHIWTLADTTRSGQLHFPEFALAMYLCNLKLTGKSLPPSLPDNIKNEVSSMVDIINFSIAEESGSASATSTNAPDFGVRQNTATPPVIQHPQPQPSSSQLLQAQMTGFPAQQTGFMGQGLQPQQTGMPQATGYTGPRPPMPPMPTGFGSNLSPNVGPGGMIAPLNAQPTGRPGQWGLVNTPATGLPNIDALQARMMPQQGREQQDYTTAGLQGNAVIPWAITKDEKTRYDALFRAWDGLNKGYIGGDQAIEIFGQSGLEKPDLERAWTLADHGNKGRLDLDEFAVAMHLIYRKLNGYPIPNQLPPELVPPSTRNFNESLGTIKNMLHKESDFRKNSGASLLPQKTGVSYLKNHSFRGTGGASGNRKDATVFKNNDDAVGYRSSARRRVGNASPRPESPASVGSNEELSLDQLRKKIKEKQVLLDAMDFADEKNMEEDDILDRRDRREAEELYRRIRRIQEDIDNHPDASPIGGDSEAERRALKRQLQNLTDKIPELASQVRKTEKAIADARLELFRLKDAKAHPGSAAAIVGTGPGGAITESDRLKARAKAMMQQRTAALTGKKIDVTSDQDAEKRLEEESIKARTEKENNERMVRDVEDSVRDFAKGIEDNLKEGGQDSTTEHEKRRWEDALGVEDEVRDFIYDLQRSSRASRIRSQDRQGGRKATQEPVSAEAPPTARVDSPASISRTASPAAPPAAGGSYSSYKTPEERAAFIKQQAEQRMAERLAALGIKAPTKPGETAAQRAEREQAERAAKLRQAEEEDARRETERQARLAEEQGVPPPAVSQAAKPEGKKPPPPPSRKAAKPDDRRAEEELATKKAEEERLERERGEQERATRELESQAKAQEDELAKEREEADARLRALEEQVRQGKLKKEEEKRKKKAALAEAKEKEAQLAQRRAEIEAARKREEELRRQLEAMDDDSSSDDEGPEQITPQASTPTMNDSHIVNREPERQPTPPPAPVVSPPQIVTSSPPTEGESRNPYFRMMSHSSDASPATAPAPPVAPPVAPPAPPQPEASTNPFHRIAQAPAPETSPVPVTRRRPDDDGWGSDKDEEDEESDDDRPGGKSAAALASILFGTMAPPRPLSATGDKSATSPTVSSPVAPPPESASPPAASPSAPPPPPPMPGSFPSASPGPGAPPPPPPPPPPMPSAGGPPGAPPAPPPPPPGMAPPAPPPPPPAGGPPAAAPAGGRPAGLLGQIQAGKALKKTTTRDKSAAAVAGRVLD.

Residues 1 to 140 form a disordered region; that stretch reads MYSNPNNFFG…PPPPVKPQAT (140 aa). Low complexity-rich tracts occupy residues 15–37 and 59–71; these read GPGA…QQPD and PGLQ…LQPQ. The segment covering 72–83 has biased composition (polar residues); sequence FTGYGQTPQQGM. Residues 93 to 119 show a composition bias toward low complexity; sequence IPQQYQQQFQQQQTQQQQPQQQQMPFA. The span at 120–136 shows a compositional bias: pro residues; the sequence is AAPPQPTQTLAPPPPVK. EH domains follow at residues 181–270 and 444–533; these read DQAK…VSSM and EKTR…STRN. EF-hand domains lie at 214–249 and 477–512; these read LDGD…CNLK and LEKP…IYRK. Disordered stretches follow at residues 600–625, 788–851, and 865–1450; these read RSSA…SNEE, SDQD…WEDA, and LQRS…RVLD. Positions 622 to 741 form a coiled coil; that stretch reads SNEELSLDQL…ELFRLKDAKA (120 aa). A compositionally biased stretch (basic and acidic residues) spans 788 to 850; sequence SDQDAEKRLE…TEHEKRRWED (63 aa). The segment covering 902–924 has biased composition (low complexity); that stretch reads SPASISRTASPAAPPAAGGSYSS. Residues 960 to 1148 are a coiled coil; the sequence is ETAAQRAERE…LEAMDDDSSS (189 aa). Basic and acidic residues-rich tracts occupy residues 965–997, 1026–1101, and 1110–1140; these read RAER…RLAE, AKPD…EEEK, and EAKE…RQLE. A compositionally biased stretch (acidic residues) spans 1141 to 1153; it reads AMDDDSSSDDEGP. A compositionally biased stretch (polar residues) spans 1156–1169; that stretch reads ITPQASTPTMNDSH. Pro residues-rich tracts occupy residues 1178 to 1188 and 1222 to 1239; these read QPTPPPAPVVS and APAP…PPQP. Basic and acidic residues predominate over residues 1265–1275; that stretch reads RRPDDDGWGSD. Over residues 1276-1285 the composition is skewed to acidic residues; it reads KDEEDEESDD. The span at 1314 to 1323 shows a compositional bias: polar residues; that stretch reads GDKSATSPTV. Composition is skewed to pro residues over residues 1327–1352, 1361–1375, and 1381–1411; these read VAPP…PMPG, PGAP…PPMP, and PGAP…PPAA. The WH2 domain occupies 1417 to 1434; the sequence is RPAGLLGQIQAGKALKKT.

This sequence belongs to the PAN1 family. In terms of assembly, component of the PAN1 actin cytoskeleton-regulatory complex.

Its subcellular location is the cell membrane. It localises to the endosome membrane. The protein localises to the cytoplasm. It is found in the cytoskeleton. The protein resides in the actin patch. Its function is as follows. Component of the PAN1 actin cytoskeleton-regulatory complex required for the internalization of endosomes during actin-coupled endocytosis. The complex links the site of endocytosis to the cell membrane-associated actin cytoskeleton. Mediates uptake of external molecules and vacuolar degradation of plasma membrane proteins. Plays a role in the proper organization of the cell membrane-associated actin cytoskeleton and promotes its destabilization. This chain is Actin cytoskeleton-regulatory complex protein PAN1 (PAN1), found in Chaetomium globosum (strain ATCC 6205 / CBS 148.51 / DSM 1962 / NBRC 6347 / NRRL 1970) (Soil fungus).